Here is a 208-residue protein sequence, read N- to C-terminus: Proheparin-binding EGF-like growth factor (208 aa).

Residues 1 to 19 (MKLLPSVVLKLLLAAVLSA) form the signal peptide. Residues 20–62 (LVTGESLEQLRRGLAAGTSNPDPSTGSTDQLLRLGGGRDRKVR) constitute a propeptide that is removed on maturation. The Extracellular portion of the chain corresponds to 20-160 (LVTGESLEQL…ENRLYTYDHT (141 aa)). A disordered region spans residues 34–55 (AAGTSNPDPSTGSTDQLLRLGG). Over residues 36–49 (GTSNPDPSTGSTDQ) the composition is skewed to polar residues. O-linked (GalNAc...) threonine glycans are attached at residues threonine 75 and threonine 85. A disordered region spans residues 81 to 104 (QALATPSKEEHGKRKKKGKGLGKK). Positions 93-102 (KRKKKGKGLG) are enriched in basic residues. The 41-residue stretch at 104 to 144 (KRDPCLRKYKDFCIHGECKYVKELRAPSCICHPGYHGERCH) folds into the EGF-like domain. 3 cysteine pairs are disulfide-bonded: cysteine 108/cysteine 121, cysteine 116/cysteine 132, and cysteine 134/cysteine 143. The interval 136 to 148 (PGYHGERCHGLSL) is toxin-binding domain. The propeptide at 149–208 (PVENRLYTYDHTTILAVVAVVLSSVCLLVIVGLLMFRYHRRGGYDVENEEKVKLGMTNSH) is C-terminal. The helical transmembrane segment at 161-184 (TILAVVAVVLSSVCLLVIVGLLMF) threads the bilayer. At 185–208 (RYHRRGGYDVENEEKVKLGMTNSH) the chain is on the cytoplasmic side.

In terms of assembly, interacts with EGFR and ERBB4. Interacts with FBLN1. O-glycosylated.

The protein localises to the secreted. It localises to the extracellular space. Its subcellular location is the cell membrane. Functionally, growth factor that mediates its effects via EGFR, ERBB2 and ERBB4. Required for normal cardiac valve formation and normal heart function. Promotes smooth muscle cell proliferation. May be involved in macrophage-mediated cellular proliferation. It is mitogenic for fibroblasts, but not endothelial cells. It is able to bind EGF receptor/EGFR with higher affinity than EGF itself and is a far more potent mitogen for smooth muscle cells than EGF. Also acts as a diphtheria toxin receptor. This chain is Proheparin-binding EGF-like growth factor (HBEGF), found in Chlorocebus aethiops (Green monkey).